Here is a 365-residue protein sequence, read N- to C-terminus: Alternative oxidase 2, mitochondrial (365 aa).

The span at 32–46 (TPPHSTTTTSPSSPA) shows a compositional bias: low complexity. A disordered region spans residues 32-52 (TPPHSTTTTSPSSPAFHQPNH). Positions 166, 205, and 208 each coordinate Fe cation. Residues 220–242 (WFTRSIIYVGQGVFTNVFFLLYL) form a helical membrane-spanning segment. Glu-256, Glu-257, Glu-312, and His-315 together coordinate Fe cation. The tract at residues 345–365 (QPNHGINVMRPTGWEKQDLQL) is disordered.

The protein belongs to the alternative oxidase family. It depends on Fe cation as a cofactor.

Its subcellular location is the mitochondrion inner membrane. Functionally, catalyzes cyanide-resistant oxygen consumption. May increase respiration when the cytochrome respiratory pathway is restricted, or in response to low temperatures. This Candida albicans (Yeast) protein is Alternative oxidase 2, mitochondrial (AOX2).